The following is a 140-amino-acid chain: Small ribosomal subunit protein uS19 (140 aa).

Residues 43-71 form a disordered region; sequence IERGLTTEQQKLRETVRDADPQKTANDPI. Residues 52-63 show a composition bias toward basic and acidic residues; that stretch reads QKLRETVRDADP.

Belongs to the universal ribosomal protein uS19 family.

Protein S19 forms a complex with S13 that binds strongly to the 16S ribosomal RNA. The chain is Small ribosomal subunit protein uS19 from Haloquadratum walsbyi (strain DSM 16790 / HBSQ001).